Reading from the N-terminus, the 305-residue chain is Small ribosomal subunit protein bS1B (305 aa).

3 consecutive S1 motif domains span residues 29 to 98 (GQTV…LSRR), 116 to 180 (GKTL…LTQR), and 194 to 262 (GNIY…LSTR).

This sequence belongs to the bacterial ribosomal protein bS1 family.

Functionally, binds mRNA. The sequence is that of Small ribosomal subunit protein bS1B (rps1b) from Synechocystis sp. (strain ATCC 27184 / PCC 6803 / Kazusa).